The following is a 234-amino-acid chain: GTP cyclohydrolase 1 (234 aa).

The tract at residues 1–26 (MDALIKPLRAGKPDAKPADPKGTEFR) is disordered. Positions 11–26 (GKPDAKPADPKGTEFR) are enriched in basic and acidic residues. 3 residues coordinate Zn(2+): Cys123, His126, and Cys194.

The protein belongs to the GTP cyclohydrolase I family. Toroid-shaped homodecamer, composed of two pentamers of five dimers.

The enzyme catalyses GTP + H2O = 7,8-dihydroneopterin 3'-triphosphate + formate + H(+). It functions in the pathway cofactor biosynthesis; 7,8-dihydroneopterin triphosphate biosynthesis; 7,8-dihydroneopterin triphosphate from GTP: step 1/1. The chain is GTP cyclohydrolase 1 from Rhodopseudomonas palustris (strain BisB18).